The following is an 86-amino-acid chain: Large ribosomal subunit protein bL31B (86 aa).

This sequence belongs to the bacterial ribosomal protein bL31 family. Type B subfamily. In terms of assembly, part of the 50S ribosomal subunit.

This is Large ribosomal subunit protein bL31B from Streptococcus agalactiae serotype Ia (strain ATCC 27591 / A909 / CDC SS700).